A 425-amino-acid polypeptide reads, in one-letter code: Polyribonucleotide 5'-hydroxyl-kinase Clp1 (425 aa).

Residues Glu22, Lys62, and Asp124–Thr129 each bind ATP.

This sequence belongs to the Clp1 family. Clp1 subfamily. As to quaternary structure, component of the tRNA splicing endonuclease complex, composed of CLP1, TSEN2, TSEN15, TSEN34 and TSEN54. Component of pre-mRNA cleavage complex II (CF-II). Also associates with numerous components of the pre-mRNA cleavage complex I (CF-I/CFIm), including NUDT21, CPSF2, CPSF3, CPSF6 and CPSF7. Interacts with CSTF2 and SYMPK. It depends on Mg(2+) as a cofactor. Mn(2+) serves as cofactor. The cofactor is Ni(2+).

The protein localises to the nucleus. It carries out the reaction a 5'-end dephospho-2'-deoxyribonucleoside-DNA + ATP = a 5'-end 5'-phospho-2'-deoxyribonucleoside-DNA + ADP + H(+). The catalysed reaction is a 5'-end dephospho-ribonucleoside-RNA + ATP = a 5'-end 5'-phospho-ribonucleoside-RNA + ADP + H(+). Polynucleotide kinase that can phosphorylate the 5'-hydroxyl groups of double-stranded RNA (dsRNA), single-stranded RNA (ssRNA), double-stranded DNA (dsDNA) and double-stranded DNA:RNA hybrids. dsRNA is phosphorylated more efficiently than dsDNA, and the RNA component of a DNA:RNA hybrid is phosphorylated more efficiently than the DNA component. Plays a key role in both tRNA splicing and mRNA 3'-end formation. Component of the tRNA splicing endonuclease complex: phosphorylates the 5'-terminus of the tRNA 3'-exon during tRNA splicing; this phosphorylation event is a prerequisite for the subsequent ligation of the two exon halves and the production of a mature tRNA. Its role in tRNA splicing and maturation is required for cerebellar development. Component of the pre-mRNA cleavage complex II (CF-II), which seems to be required for mRNA 3'-end formation. Also phosphorylates the 5'-terminus of exogenously introduced short interfering RNAs (siRNAs), which is a necessary prerequisite for their incorporation into the RNA-induced silencing complex (RISC). However, endogenous siRNAs and microRNAs (miRNAs) that are produced by the cleavage of dsRNA precursors by DICER1 already contain a 5'-phosphate group, so this protein may be dispensible for normal RNA-mediated gene silencing. This is Polyribonucleotide 5'-hydroxyl-kinase Clp1 from Bos taurus (Bovine).